Consider the following 383-residue polypeptide: Queuine tRNA-ribosyltransferase (383 aa).

Residue Asp92 is the Proton acceptor of the active site. Substrate-binding positions include 92–96 (DSGGF), Asp146, Gln190, and Gly217. Positions 248–254 (GVGKPED) are RNA binding. Catalysis depends on Asp267, which acts as the Nucleophile. Residues 272–276 (TRNAR) form an RNA binding; important for wobble base 34 recognition region. Zn(2+) contacts are provided by Cys310, Cys312, Cys315, and His341.

This sequence belongs to the queuine tRNA-ribosyltransferase family. As to quaternary structure, homodimer. Within each dimer, one monomer is responsible for RNA recognition and catalysis, while the other monomer binds to the replacement base PreQ1. It depends on Zn(2+) as a cofactor.

The enzyme catalyses 7-aminomethyl-7-carbaguanine + guanosine(34) in tRNA = 7-aminomethyl-7-carbaguanosine(34) in tRNA + guanine. The protein operates within tRNA modification; tRNA-queuosine biosynthesis. In terms of biological role, catalyzes the base-exchange of a guanine (G) residue with the queuine precursor 7-aminomethyl-7-deazaguanine (PreQ1) at position 34 (anticodon wobble position) in tRNAs with GU(N) anticodons (tRNA-Asp, -Asn, -His and -Tyr). Catalysis occurs through a double-displacement mechanism. The nucleophile active site attacks the C1' of nucleotide 34 to detach the guanine base from the RNA, forming a covalent enzyme-RNA intermediate. The proton acceptor active site deprotonates the incoming PreQ1, allowing a nucleophilic attack on the C1' of the ribose to form the product. After dissociation, two additional enzymatic reactions on the tRNA convert PreQ1 to queuine (Q), resulting in the hypermodified nucleoside queuosine (7-(((4,5-cis-dihydroxy-2-cyclopenten-1-yl)amino)methyl)-7-deazaguanosine). The chain is Queuine tRNA-ribosyltransferase from Psychrobacter cryohalolentis (strain ATCC BAA-1226 / DSM 17306 / VKM B-2378 / K5).